A 261-amino-acid polypeptide reads, in one-letter code: Ribonuclease PH (261 aa).

Phosphate-binding positions include R88 and 126–128 (GTR). The segment at 242-261 (PYPGVLPEPKNPEPKKKFGA) is disordered. A compositionally biased stretch (basic and acidic residues) spans 251–261 (KNPEPKKKFGA).

The protein belongs to the RNase PH family. Homohexameric ring arranged as a trimer of dimers.

The enzyme catalyses tRNA(n+1) + phosphate = tRNA(n) + a ribonucleoside 5'-diphosphate. Its function is as follows. Phosphorolytic 3'-5' exoribonuclease that plays an important role in tRNA 3'-end maturation. Removes nucleotide residues following the 3'-CCA terminus of tRNAs; can also add nucleotides to the ends of RNA molecules by using nucleoside diphosphates as substrates, but this may not be physiologically important. Probably plays a role in initiation of 16S rRNA degradation (leading to ribosome degradation) during starvation. In Rhodococcus erythropolis (strain PR4 / NBRC 100887), this protein is Ribonuclease PH.